The following is a 504-amino-acid chain: MASWTSSQFLYEETKPWGIQFLEKFKRSGRLSFKQYQALVFILTFVAYIAFHAARKPNSIVKGTLSASTIEGGWAPFDGPDGTALLGQIDLAFLSVYAVGMFVAGHLGDRLDLRTFLTIGMIGTGLFTALFGVAFWANFHSFYYFLAVQVMAGLFQSIGWPCIVAVLGNWFDKKRRGMIMGVWSAHTSLGNIAGSLIASGLLRYGWGWSFLGPAFLMTFLGIVVYLFLPVNPPTVEAERDGTEIDSTMRLGDTITESLLESRMSTGFDRKAVGFMAAWKIPGVAPFAFCLFFTKLVSYTFLYWLPFYVSHNMIGGEYLSEETSGNLSTIFDVGGVVGGVLAGYISDQLNGRAITAAGFMYLAIPALFLYRVFGHISLTINVILMFTSGVFIIGPFALITTAVSADLGTHKSLKGNARALATVSAIIDGTGSVGAAIGPVLTGYISAISWDAVFYMLMTAALISGLLLTKLIIAEVKALLFGSEDEVAASSSSPPASRPPIDVLV.

The next 12 helical transmembrane spans lie at 31 to 51 (LSFK…YIAF), 84 to 104 (ALLG…MFVA), 116 to 136 (FLTI…VAFW), 145 to 165 (FLAV…CIVA), 178 to 198 (MIMG…SLIA), 210 to 230 (FLGP…FLPV), 280 to 302 (IPGV…TFLY), 324 to 344 (GNLS…AGYI), 352 to 372 (AITA…YRVF), 378 to 398 (TINV…FALI), 424 to 444 (AIID…TGYI), and 452 to 472 (VFYM…KLII).

The protein belongs to the major facilitator superfamily. Organophosphate:Pi antiporter (OPA) (TC 2.A.1.4) family. Expressed in the root-hair differentiation zone.

Its subcellular location is the membrane. The polypeptide is Putative glycerol-3-phosphate transporter 2 (Arabidopsis thaliana (Mouse-ear cress)).